The following is a 299-amino-acid chain: tRNA pseudouridine synthase B (299 aa).

The active-site Nucleophile is Asp49. The region spanning 241-299 is the PUA domain; that stretch reads MPRVTVSGRAAARVLHGVAPAVRVEHPDGTTVAVVAANGALLALAEADGGGLRLRKVFG.

This sequence belongs to the pseudouridine synthase TruB family. Type 1 subfamily.

The enzyme catalyses uridine(55) in tRNA = pseudouridine(55) in tRNA. Responsible for synthesis of pseudouridine from uracil-55 in the psi GC loop of transfer RNAs. This is tRNA pseudouridine synthase B from Symbiobacterium thermophilum (strain DSM 24528 / JCM 14929 / IAM 14863 / T).